A 209-amino-acid chain; its full sequence is Transmembrane emp24 domain-containing protein B (209 aa).

Positions 1–24 (MNKTNQLINICILVTLFLIGSSSA) are cleaved as a signal peptide. Over 25–174 (LTLQVEPKSQ…RDTSESTNAR (150 aa)) the chain is Lumenal. The GOLD domain occupies 34–119 (QECFYNFIES…AKVVTFTWAS (86 aa)). A helical transmembrane segment spans residues 175–195 (VVWWTIAEVIVLVVMGVGQIW). The Cytoplasmic portion of the chain corresponds to 196 to 209 (YLRKWFDNKSTGRV).

Belongs to the EMP24/GP25L family.

The protein localises to the cytoplasmic vesicle membrane. Could have a role in the budding of coatomer-coated and other species of coated vesicles. The sequence is that of Transmembrane emp24 domain-containing protein B (empB) from Dictyostelium discoideum (Social amoeba).